A 573-amino-acid chain; its full sequence is Multidrug and toxin extrusion protein 2 (573 aa).

The Cytoplasmic segment spans residues 1–46; that stretch reads MEPAEDSLGATIQPPELVRVPRGRSLRILLGLRGALSPDVRREAAA. The chain crosses the membrane as a helical span at residues 47-67; it reads LVALAGPVFLAQLMIFLISIV. At 68-81 the chain is on the extracellular side; sequence SSIFCGHLGKVELD. The helical transmembrane segment at 82-102 threads the bilayer; sequence AVTLAVSVVNVTGISVGTGLA. The Cytoplasmic portion of the chain corresponds to 103-122; the sequence is SACDTLMSQSFGGKNLKRVG. The helical transmembrane segment at 123 to 143 threads the bilayer; that stretch reads VILQRGILILLLCCFPCWAIF. The Extracellular portion of the chain corresponds to 144–161; the sequence is LNTERLLLLLRQDPDVAR. The chain crosses the membrane as a helical span at residues 162–182; that stretch reads LAQVYVMICIPALPAAFLFQL. Residues 183-196 lie on the Cytoplasmic side of the membrane; sequence QTRYLQSQGIIMPQ. A helical transmembrane segment spans residues 197–217; the sequence is VIVGIAANVVNVGMNAFLLYA. Over 218 to 225 the chain is Extracellular; the sequence is LDLGVVGS. A helical membrane pass occupies residues 226 to 246; the sequence is AWANTTSQFFLSALLFLYVWW. The Cytoplasmic portion of the chain corresponds to 247–266; sequence KRIHIHTWGGWTRECFQEWS. A helical membrane pass occupies residues 267–286; it reads SYTRLAIPSMFMVCIEWWTF. At 287-304 the chain is on the extracellular side; it reads EIGTFLAGLVNVTELGAQ. The helical transmembrane segment at 305-325 threads the bilayer; sequence AVIYELASVAYMVPFGFGVAA. Over 326-345 the chain is Cytoplasmic; the sequence is SVRVGNALGAGNADQARCSC. A helical membrane pass occupies residues 346–366; that stretch reads TTVLLCAGVCALLVGILLAAL. At 367 to 379 the chain is on the extracellular side; it reads KDVVAYIFTNDKD. Residues 380 to 400 form a helical membrane-spanning segment; sequence IISLVSQVMPIFAPFHLFDAL. Over 401 to 415 the chain is Cytoplasmic; sequence AGTCGGVLRGTGKQK. Residues 416–436 form a helical membrane-spanning segment; it reads IGAVLNTIGYYGFGFPIGVSL. Over 437–443 the chain is Extracellular; sequence MFAAKLG. A helical transmembrane segment spans residues 444–464; it reads IIGLWAGLIVCVSFQAFSYLI. Over 465-545 the chain is Cytoplasmic; sequence YILRTNWSRV…VGEVLTGRQL (81 aa). Residues 546-566 form a helical membrane-spanning segment; sequence VFYRGMALTVSVAVLIAGIVV. The Extracellular portion of the chain corresponds to 567–573; it reads RVFNDRG.

It belongs to the multi antimicrobial extrusion (MATE) (TC 2.A.66.1) family. Expressed in testis; especially in testicular Leydig cells.

The protein resides in the cell membrane. In terms of biological role, multidrug efflux pump that functions as a H(+)/organic cation antiporter. May mediate testosterone efflux from the Leydig cells in the testes. This chain is Multidrug and toxin extrusion protein 2 (Slc47a2), found in Mus musculus (Mouse).